A 417-amino-acid polypeptide reads, in one-letter code: NADH-quinone oxidoreductase subunit D (417 aa).

This sequence belongs to the complex I 49 kDa subunit family. NDH-1 is composed of 14 different subunits. Subunits NuoB, C, D, E, F, and G constitute the peripheral sector of the complex.

It localises to the cell inner membrane. It catalyses the reaction a quinone + NADH + 5 H(+)(in) = a quinol + NAD(+) + 4 H(+)(out). NDH-1 shuttles electrons from NADH, via FMN and iron-sulfur (Fe-S) centers, to quinones in the respiratory chain. The immediate electron acceptor for the enzyme in this species is believed to be ubiquinone. Couples the redox reaction to proton translocation (for every two electrons transferred, four hydrogen ions are translocated across the cytoplasmic membrane), and thus conserves the redox energy in a proton gradient. The sequence is that of NADH-quinone oxidoreductase subunit D from Polaromonas naphthalenivorans (strain CJ2).